The sequence spans 79 residues: Small ribosomal subunit protein bS21 (79 aa).

The interval 59–79 (RKKMQREGLLPMKPKPVVGVR) is disordered.

It belongs to the bacterial ribosomal protein bS21 family.

This chain is Small ribosomal subunit protein bS21, found in Methylocella silvestris (strain DSM 15510 / CIP 108128 / LMG 27833 / NCIMB 13906 / BL2).